We begin with the raw amino-acid sequence, 398 residues long: Putative F-box/kelch-repeat protein At2g29780 (398 aa).

A disordered region spans residues 1–46 (MAIISETSDDGSHGGVPNKKPEELHKNPKEDDHQEEEVENHPPIPR). Over residues 19–32 (KKPEELHKNPKEDD) the composition is skewed to basic and acidic residues. In terms of domain architecture, F-box spans 43–90 (PIPRQIPQALIRRTVALIKRCHYPSLSLLSKAFRIVISSPELHQTRSS). Kelch repeat units follow at residues 148-195 (KMYV…VING), 196-241 (KIYV…GFVT), 243-289 (VVMQ…VIED), and 295-342 (DPYC…GGKL).

This chain is Putative F-box/kelch-repeat protein At2g29780, found in Arabidopsis thaliana (Mouse-ear cress).